The following is a 258-amino-acid chain: Imidazole glycerol phosphate synthase subunit HisF (258 aa).

Active-site residues include Asp11 and Asp130.

Belongs to the HisA/HisF family. Heterodimer of HisH and HisF.

It is found in the cytoplasm. The catalysed reaction is 5-[(5-phospho-1-deoxy-D-ribulos-1-ylimino)methylamino]-1-(5-phospho-beta-D-ribosyl)imidazole-4-carboxamide + L-glutamine = D-erythro-1-(imidazol-4-yl)glycerol 3-phosphate + 5-amino-1-(5-phospho-beta-D-ribosyl)imidazole-4-carboxamide + L-glutamate + H(+). It participates in amino-acid biosynthesis; L-histidine biosynthesis; L-histidine from 5-phospho-alpha-D-ribose 1-diphosphate: step 5/9. Its function is as follows. IGPS catalyzes the conversion of PRFAR and glutamine to IGP, AICAR and glutamate. The HisF subunit catalyzes the cyclization activity that produces IGP and AICAR from PRFAR using the ammonia provided by the HisH subunit. This chain is Imidazole glycerol phosphate synthase subunit HisF, found in Shigella boydii serotype 4 (strain Sb227).